A 130-amino-acid polypeptide reads, in one-letter code: Iron-sulfur cluster assembly 1 homolog, mitochondrial (130 aa).

Residues 1–24 (MATRVVATATVRAVKGRKLIPTRA) constitute a mitochondrion transit peptide. Residues Cys58, Cys122, and Cys124 each coordinate Fe cation.

Belongs to the HesB/IscA family. Interacts with cry. As to expression, detected in head.

It localises to the mitochondrion. In terms of biological role, involved in the assembly of mitochondrial iron-sulfur proteins. Probably involved in the binding of an intermediate of Fe/S cluster assembly. Required for maintenance of circadian rhythms under constant darkness. The chain is Iron-sulfur cluster assembly 1 homolog, mitochondrial from Drosophila melanogaster (Fruit fly).